Consider the following 77-residue polypeptide: PTS system N-acetylglucosamine-specific EIIB component (77 aa).

The 76-residue stretch at 2–77 (ASKAEKIVAG…PIAAEIEDMM (76 aa)) folds into the PTS EIIB type-1 domain. Cys-24 (phosphocysteine intermediate; for EIIB activity) is an active-site residue.

The catalysed reaction is N(pros)-phospho-L-histidyl-[protein] + N-acetyl-D-glucosamine(out) = N-acetyl-D-glucosamine 6-phosphate(in) + L-histidyl-[protein]. Functionally, the phosphoenolpyruvate-dependent sugar phosphotransferase system (sugar PTS), a major carbohydrate active transport system, catalyzes the phosphorylation of incoming sugar substrates concomitantly with their translocation across the cell membrane. This system is involved in N-acetylglucosamine (GlcNAc) transport. This Streptomyces coelicolor (strain ATCC BAA-471 / A3(2) / M145) protein is PTS system N-acetylglucosamine-specific EIIB component.